Consider the following 211-residue polypeptide: Octanoyltransferase (211 aa).

The region spanning Pro-32 to Ile-207 is the BPL/LPL catalytic domain. Residues Arg-71 to His-78, Ser-138 to Gly-140, and Gly-151 to Ala-153 each bind substrate. Cys-169 (acyl-thioester intermediate) is an active-site residue.

This sequence belongs to the LipB family.

The protein resides in the cytoplasm. It catalyses the reaction octanoyl-[ACP] + L-lysyl-[protein] = N(6)-octanoyl-L-lysyl-[protein] + holo-[ACP] + H(+). The protein operates within protein modification; protein lipoylation via endogenous pathway; protein N(6)-(lipoyl)lysine from octanoyl-[acyl-carrier-protein]: step 1/2. In terms of biological role, catalyzes the transfer of endogenously produced octanoic acid from octanoyl-acyl-carrier-protein onto the lipoyl domains of lipoate-dependent enzymes. Lipoyl-ACP can also act as a substrate although octanoyl-ACP is likely to be the physiological substrate. This Buchnera aphidicola subsp. Acyrthosiphon pisum (strain APS) (Acyrthosiphon pisum symbiotic bacterium) protein is Octanoyltransferase.